The primary structure comprises 470 residues: Argininosuccinate lyase (470 aa).

It belongs to the lyase 1 family. Argininosuccinate lyase subfamily.

The protein localises to the cytoplasm. It carries out the reaction 2-(N(omega)-L-arginino)succinate = fumarate + L-arginine. It functions in the pathway amino-acid biosynthesis; L-arginine biosynthesis; L-arginine from L-ornithine and carbamoyl phosphate: step 3/3. This is Argininosuccinate lyase from Bordetella avium (strain 197N).